Reading from the N-terminus, the 394-residue chain is MLLEAPVYKEIFGAVKIYELQKVIKLDTETEDVPVYTITNIPREKIYDTLGKMAVIVPMKNEKLHLVDGVLKAIPHKCPIIIVSNSKREGPNRYRLEVDLVRHFYNLTNSKIIMVHQRDPGLAKAFQKVGYTDILDEKGNIRSGKGEGMLIGILLAKAIGAEYVGFVDADNYIPGAVNEYVKDYAAGFLMSESDYTMVRLHWRHKPKVTKGTLYFKKWGRVSEITNHYLNMLISEQTSFETTIMVTGNAGEHAMTMKLAEIMPFSTNYSIEPYEIVYLLERFGKWENVEEFKDVFDQGIEIFQIETLNPHFHEDKGQEHVREMILLSLATIYHSKMASKNLKRRILNDLIEHGILKEGEEPPKLRIMRPINEIDIEEWMKVVENNSETLLRFGL.

Belongs to the glycosyltransferase 2 family.

Its subcellular location is the cytoplasm. The catalysed reaction is (2R)-3-phosphoglycerate + GDP-alpha-D-mannose = 2-O-(alpha-D-mannosyl)-3-phosphoglycerate + GDP + H(+). Its pathway is carbohydrate biosynthesis; 2-(alpha-D-mannosyl)-D-glycerate biosynthesis; 2-(alpha-D-mannosyl)-D-glycerate from GDP-alpha-D-mannose (MPG route): step 1/2. Transfers a mannosyl group from GDP-mannose to phosphoglycerate to form mannosyl-3-phosphoglycerate (MPG). The chain is Mannosyl-3-phosphoglycerate synthase (mngA) from Pyrococcus furiosus (strain ATCC 43587 / DSM 3638 / JCM 8422 / Vc1).